The sequence spans 354 residues: Nicotinate-nucleotide--dimethylbenzimidazole phosphoribosyltransferase (354 aa).

Glutamate 319 functions as the Proton acceptor in the catalytic mechanism.

The protein belongs to the CobT family.

It carries out the reaction 5,6-dimethylbenzimidazole + nicotinate beta-D-ribonucleotide = alpha-ribazole 5'-phosphate + nicotinate + H(+). Its pathway is nucleoside biosynthesis; alpha-ribazole biosynthesis; alpha-ribazole from 5,6-dimethylbenzimidazole: step 1/2. In terms of biological role, catalyzes the synthesis of alpha-ribazole-5'-phosphate from nicotinate mononucleotide (NAMN) and 5,6-dimethylbenzimidazole (DMB). The protein is Nicotinate-nucleotide--dimethylbenzimidazole phosphoribosyltransferase of Pelodictyon phaeoclathratiforme (strain DSM 5477 / BU-1).